The sequence spans 41 residues: Large ribosomal subunit protein bL36 (41 aa).

This sequence belongs to the bacterial ribosomal protein bL36 family.

This Caulobacter vibrioides (strain ATCC 19089 / CIP 103742 / CB 15) (Caulobacter crescentus) protein is Large ribosomal subunit protein bL36.